The sequence spans 1183 residues: Putative ATP-dependent RNA helicase PB1A10.06c (1183 aa).

2 disordered regions span residues 1–92 (MGRL…KKRL) and 165–315 (ETTT…RASR). The segment covering 60–81 (VPKEERQKRKQELKDQLLKENE) has biased composition (basic and acidic residues). Low complexity-rich tracts occupy residues 165 to 176 (ETTTTKSSTAET) and 184 to 196 (TRSG…STGT). A compositionally biased stretch (acidic residues) spans 224 to 251 (EDPEYDSAEEDYLSTDSEEFSEDSDNSS). Residues 252-270 (EENKDTNEPSTKDAEKTVP) are compositionally biased toward basic and acidic residues. Residues 292–308 (ENEDFDLETSEDDSSDD) are compositionally biased toward acidic residues. The region spanning 408-585 (MEQIFANDVV…KLLFSVPPPI (178 aa)) is the Helicase ATP-binding domain. 421-428 (GATGSGKT) contributes to the ATP binding site. The DEAH box motif lies at 522 to 525 (DEAH). Residues 611 to 831 (AFDKVCLIHK…SIVLQMKNMN (221 aa)) form the Helicase C-terminal domain. The segment covering 673–683 (EDLQSETEDID) has biased composition (acidic residues). Positions 673-696 (EDLQSETEDIDQVPTSSSSSVTYD) are disordered.

The protein belongs to the DEAD box helicase family. DEAH subfamily.

Its subcellular location is the nucleus. The protein localises to the nucleolus. It catalyses the reaction ATP + H2O = ADP + phosphate + H(+). In Schizosaccharomyces pombe (strain 972 / ATCC 24843) (Fission yeast), this protein is Putative ATP-dependent RNA helicase PB1A10.06c.